The primary structure comprises 71 residues: Conotoxin De13.1 (71 aa).

Positions 1-19 (MSGMGVLLLVLLLVMPLAA) are cleaved as a signal peptide. The propeptide occupies 20–35 (FHQDGEGEATRRSGGL). A 4-hydroxyproline mark is found at Pro-40 and Pro-44. 6'-bromotryptophan is present on Trp-51. At Glu-52 the chain carries 4-carboxyglutamate. 5-hydroxylysine is present on Lys-55. Pro-58 bears the 4-hydroxyproline mark. Histidine amide is present on His-69.

It belongs to the conotoxin G superfamily. Post-translationally, contains 4 disulfide bonds. As to expression, expressed by the venom duct.

Its subcellular location is the secreted. In Conasprella delessertii (Sozon's cone), this protein is Conotoxin De13.1.